A 275-amino-acid polypeptide reads, in one-letter code: uncharacterized protein (275 aa).

Disordered regions lie at residues Met1 to Gln25 and Gln185 to Met275. Residues Lys228–Asp239 show a composition bias toward basic and acidic residues.

This is an uncharacterized protein from Neurospora crassa (strain ATCC 24698 / 74-OR23-1A / CBS 708.71 / DSM 1257 / FGSC 987).